Reading from the N-terminus, the 178-residue chain is ATP-dependent protease subunit HslV (178 aa).

T7 is an active-site residue. The Na(+) site is built by G162, C165, and T168.

Belongs to the peptidase T1B family. HslV subfamily. As to quaternary structure, a double ring-shaped homohexamer of HslV is capped on each side by a ring-shaped HslU homohexamer. The assembly of the HslU/HslV complex is dependent on binding of ATP.

The protein resides in the cytoplasm. It carries out the reaction ATP-dependent cleavage of peptide bonds with broad specificity.. Its activity is regulated as follows. Allosterically activated by HslU binding. Protease subunit of a proteasome-like degradation complex believed to be a general protein degrading machinery. The polypeptide is ATP-dependent protease subunit HslV (Burkholderia cenocepacia (strain ATCC BAA-245 / DSM 16553 / LMG 16656 / NCTC 13227 / J2315 / CF5610) (Burkholderia cepacia (strain J2315))).